The primary structure comprises 280 residues: Acetylglutamate kinase (280 aa).

Substrate-binding positions include 64 to 65, Arg86, and Asn177; that span reads GG.

Belongs to the acetylglutamate kinase family. ArgB subfamily.

The protein resides in the cytoplasm. It catalyses the reaction N-acetyl-L-glutamate + ATP = N-acetyl-L-glutamyl 5-phosphate + ADP. It participates in amino-acid biosynthesis; L-arginine biosynthesis; N(2)-acetyl-L-ornithine from L-glutamate: step 2/4. Functionally, catalyzes the ATP-dependent phosphorylation of N-acetyl-L-glutamate. This chain is Acetylglutamate kinase, found in Nautilia profundicola (strain ATCC BAA-1463 / DSM 18972 / AmH).